The sequence spans 588 residues: Probable metalloprotease ARX1 (588 aa).

Belongs to the peptidase M24 family. Component of the nucleoplasmic and cytoplasmic pre-60S ribosomal particles.

It localises to the cytoplasm. It is found in the nucleus. In terms of biological role, probable metalloprotease involved in proper assembly of pre-ribosomal particles during the biogenesis of the 60S ribosomal subunit. Accompanies the pre-60S particles to the cytoplasm. In Candida glabrata (strain ATCC 2001 / BCRC 20586 / JCM 3761 / NBRC 0622 / NRRL Y-65 / CBS 138) (Yeast), this protein is Probable metalloprotease ARX1 (ARX1).